A 427-amino-acid chain; its full sequence is 3-phosphoshikimate 1-carboxyvinyltransferase (427 aa).

Residues Lys-22, Ser-23, and Arg-27 each coordinate 3-phosphoshikimate. Position 22 (Lys-22) interacts with phosphoenolpyruvate. Phosphoenolpyruvate contacts are provided by Gly-96 and Arg-124. Residues Ser-169, Ser-170, Gln-171, Ser-197, Asp-313, Asn-336, and Lys-340 each coordinate 3-phosphoshikimate. Position 171 (Gln-171) interacts with phosphoenolpyruvate. Asp-313 (proton acceptor) is an active-site residue. Arg-344, Arg-386, and Lys-411 together coordinate phosphoenolpyruvate.

It belongs to the EPSP synthase family. As to quaternary structure, monomer.

It is found in the cytoplasm. It carries out the reaction 3-phosphoshikimate + phosphoenolpyruvate = 5-O-(1-carboxyvinyl)-3-phosphoshikimate + phosphate. Its pathway is metabolic intermediate biosynthesis; chorismate biosynthesis; chorismate from D-erythrose 4-phosphate and phosphoenolpyruvate: step 6/7. Its function is as follows. Catalyzes the transfer of the enolpyruvyl moiety of phosphoenolpyruvate (PEP) to the 5-hydroxyl of shikimate-3-phosphate (S3P) to produce enolpyruvyl shikimate-3-phosphate and inorganic phosphate. The polypeptide is 3-phosphoshikimate 1-carboxyvinyltransferase (Salmonella newport (strain SL254)).